The primary structure comprises 238 residues: Ribonuclease PH (238 aa).

Phosphate contacts are provided by residues Arg-86 and 124-126; that span reads GTR.

Belongs to the RNase PH family. Homohexameric ring arranged as a trimer of dimers.

The enzyme catalyses tRNA(n+1) + phosphate = tRNA(n) + a ribonucleoside 5'-diphosphate. In terms of biological role, phosphorolytic 3'-5' exoribonuclease that plays an important role in tRNA 3'-end maturation. Removes nucleotide residues following the 3'-CCA terminus of tRNAs; can also add nucleotides to the ends of RNA molecules by using nucleoside diphosphates as substrates, but this may not be physiologically important. Probably plays a role in initiation of 16S rRNA degradation (leading to ribosome degradation) during starvation. This is Ribonuclease PH from Brucella abortus (strain S19).